The sequence spans 136 residues: Large-conductance mechanosensitive channel (136 aa).

Transmembrane regions (helical) follow at residues 9–29 and 79–99; these read AFASRGNVIDMAVGIIIGAAF and IQTVIDFTIIAFAIFMGLKAI.

The protein belongs to the MscL family. As to quaternary structure, homopentamer.

The protein localises to the cell inner membrane. Functionally, channel that opens in response to stretch forces in the membrane lipid bilayer. May participate in the regulation of osmotic pressure changes within the cell. The protein is Large-conductance mechanosensitive channel of Shewanella sp. (strain MR-4).